Consider the following 457-residue polypeptide: B-cell linker protein (457 aa).

The segment at 38–306 (KLKVKGPPSV…FPPTQKPVLQ (269 aa)) is disordered. The span at 57 to 74 (PADEEEQWSDDFDSDYEN) shows a compositional bias: acidic residues. 5 positions are modified to phosphotyrosine; by SYK: Tyr-72, Tyr-84, Tyr-96, Tyr-178, and Tyr-189. Residues 172 to 187 (LEDEADYVVPVEDNDE) are compositionally biased toward acidic residues. 2 stretches are compositionally biased toward polar residues: residues 206–218 (VNRSTKPNSSSKH) and 256–270 (PLKTTPVPSLQNASN). Basic and acidic residues predominate over residues 272 to 290 (CEEKPVPAERHRGSSHRQD). The region spanning 347–454 (WYAGACDRKS…KDSTRLKYAV (108 aa)) is the SH2 domain.

In terms of assembly, associates with PLCG1, VAV1 and NCK1 in a B-cell antigen receptor-dependent fashion. Interacts with VAV3, PLCG2 and GRB2. Interacts through its SH2 domain with CD79A. Interacts (via SH2 domain) with SYK; phosphorylated and activated by SYK. Interacts (via SH2 domain) with SCIMP; this interaction is dependent on phosphorylation of SCIMP 'Tyr-120'. Following BCR activation, phosphorylated on tyrosine residues by SYK and LYN. When phosphorylated, serves as a scaffold to assemble downstream targets of antigen activation, including PLCG1, VAV1, GRB2 and NCK1. Phosphorylation of Tyr-84, Tyr-178 and Tyr-189 facilitates PLCG1 binding. Phosphorylation of Tyr-96 facilitates BTK binding. Phosphorylation of Tyr-72 facilitates VAV1 and NCK1 binding. Phosphorylation is required for both Ca(2+) and MAPK signaling pathways.

It is found in the cytoplasm. The protein resides in the cell membrane. Functionally, functions as a central linker protein, downstream of the B-cell receptor (BCR), bridging the SYK kinase to a multitude of signaling pathways and regulating biological outcomes of B-cell function and development. Plays a role in the activation of ERK/EPHB2, MAP kinase p38 and JNK. Modulates AP1 activation. Important for the activation of NF-kappa-B and NFAT. Plays an important role in BCR-mediated PLCG1 and PLCG2 activation and Ca(2+) mobilization and is required for trafficking of the BCR to late endosomes. However, does not seem to be required for pre-BCR-mediated activation of MAP kinase and phosphatidyl-inositol 3 (PI3) kinase signaling. May be required for the RAC1-JNK pathway. Plays a critical role in orchestrating the pro-B cell to pre-B cell transition. May play an important role in BCR-induced B-cell apoptosis. The chain is B-cell linker protein (Blnk) from Rattus norvegicus (Rat).